The chain runs to 239 residues: MATPHINAEMGDFADVVLMPGDPLRAKHIADTFLQDAVEVNNVRGMLGYTGTYKGRKISVMGHGMGIPSCSIYAKELITEFGVKKIIRVGSCGAVRTDVKLRDVVIGMGACTDSKVNRMRFKDHDFAAIADFDMVRNAVDAAQALGVKARVGNIFSADLFYTPDPQMFDVMEKYGVLGVEMEAAGIYGVAAEFGAKALAICTVSDHIRTHEQTTAAERQTTFSEMIEIALESVLLGDKA.

Histidine 5 contacts a purine D-ribonucleoside. Phosphate-binding positions include glycine 21, arginine 25, arginine 44, and 88–91; that span reads RVGS. Residues 180–182 and 204–205 each bind a purine D-ribonucleoside; these read EME and SD. The Proton donor role is filled by aspartate 205.

It belongs to the PNP/UDP phosphorylase family. In terms of assembly, homohexamer; trimer of homodimers.

The catalysed reaction is a purine D-ribonucleoside + phosphate = a purine nucleobase + alpha-D-ribose 1-phosphate. It catalyses the reaction a purine 2'-deoxy-D-ribonucleoside + phosphate = a purine nucleobase + 2-deoxy-alpha-D-ribose 1-phosphate. Its function is as follows. Catalyzes the reversible phosphorolytic breakdown of the N-glycosidic bond in the beta-(deoxy)ribonucleoside molecules, with the formation of the corresponding free purine bases and pentose-1-phosphate. This Erwinia tasmaniensis (strain DSM 17950 / CFBP 7177 / CIP 109463 / NCPPB 4357 / Et1/99) protein is Purine nucleoside phosphorylase DeoD-type.